Consider the following 203-residue polypeptide: dITP/XTP pyrophosphatase (203 aa).

A substrate-binding site is contributed by 9-14 (SSNAGK). Mg(2+)-binding residues include Glu42 and Asp72. The active-site Proton acceptor is Asp72. Substrate-binding positions include Ser73, 161-164 (FGYD), Lys184, and 189-190 (HR).

It belongs to the HAM1 NTPase family. In terms of assembly, homodimer. The cofactor is Mg(2+).

The catalysed reaction is XTP + H2O = XMP + diphosphate + H(+). The enzyme catalyses dITP + H2O = dIMP + diphosphate + H(+). It catalyses the reaction ITP + H2O = IMP + diphosphate + H(+). Its function is as follows. Pyrophosphatase that catalyzes the hydrolysis of nucleoside triphosphates to their monophosphate derivatives, with a high preference for the non-canonical purine nucleotides XTP (xanthosine triphosphate), dITP (deoxyinosine triphosphate) and ITP. Seems to function as a house-cleaning enzyme that removes non-canonical purine nucleotides from the nucleotide pool, thus preventing their incorporation into DNA/RNA and avoiding chromosomal lesions. This Acidobacterium capsulatum (strain ATCC 51196 / DSM 11244 / BCRC 80197 / JCM 7670 / NBRC 15755 / NCIMB 13165 / 161) protein is dITP/XTP pyrophosphatase.